Here is a 749-residue protein sequence, read N- to C-terminus: Dynamin-1-like protein (749 aa).

Met-1 bears the N-acetylmethionine mark. Residues 22–315 (IIQLPQIVVV…LMHHIRDCLP (294 aa)) form the Dynamin-type G domain. Residues 32 to 39 (GTQSSGKS) are G1 motif. A GTP-binding site is contributed by 32 to 40 (GTQSSGKSS). A G2 motif region spans residues 58–60 (VTR). The disordered stretch occupies residues 74–93 (DKRKTTGEENDPATWKNSRH). The segment at 159 to 162 (DLPG) is G3 motif. The G4 motif stretch occupies residues 228-231 (TKLD). GTP is bound by residues 228–234 (TKLDLMD) and 259–262 (NRSQ). Positions 258 to 261 (VNRS) are G5 motif. The segment at 357 to 502 (YCNTIEGTAK…NEMVHNLVAI (146 aa)) is middle domain. The tract at residues 461-698 (NYSTQELLRF…NHVKDTLQSE (238 aa)) is interaction with GSK3B. The tract at residues 515–582 (ADACGLMNNN…IQESRRETKN (68 aa)) is b domain. Residues 536 to 604 (ELPSAVSRDK…QEPTTGNWRG (69 aa)) form a disordered region. Ser-542 carries the post-translational modification Phosphoserine. Residues Lys-545 and Lys-548 each participate in a glycyl lysine isopeptide (Lys-Gly) (interchain with G-Cter in SUMO) cross-link. The segment covering 550–567 (PSALAPASQEPSPAASAE) has biased composition (low complexity). Ser-561 carries the phosphoserine modification. Positions 568 to 581 (ADGKLIQESRRETK) are enriched in basic and acidic residues. Residues Lys-571 and Lys-581 each participate in a glycyl lysine isopeptide (Lys-Gly) (interchain with G-Cter in SUMO) cross-link. 2 O-linked (GlcNAc) threonine glycosylation sites follow: Thr-598 and Thr-599. Lys-607 participates in a covalent cross-link: Glycyl lysine isopeptide (Lys-Gly) (interchain with G-Cter in SUMO). Lys-610 carries the post-translational modification N6-acetyllysine; alternate. Lys-610 participates in a covalent cross-link: Glycyl lysine isopeptide (Lys-Gly) (interchain with G-Cter in SUMO); alternate. Lys-619 is covalently cross-linked (Glycyl lysine isopeptide (Lys-Gly) (interchain with G-Cter in SUMO)). A Phosphoserine modification is found at Ser-620. A Glycyl lysine isopeptide (Lys-Gly) (interchain with G-Cter in SUMO) cross-link involves residue Lys-621. Ser-629 carries the phosphoserine; by CDK1 and PINK1 modification. Residue Ser-650 is modified to Phosphoserine; by CAMK1 and PKA. Cys-657 bears the S-nitrosocysteine mark. The 92-residue stretch at 657–748 (CEVIERLIKS…IIAEIRETHL (92 aa)) folds into the GED domain. Residues 667–681 (YFLIVRKNIQDSVPK) are important for homodimerization.

The protein belongs to the TRAFAC class dynamin-like GTPase superfamily. Dynamin/Fzo/YdjA family. Homotetramer; dimerizes through the N-terminal GTP-middle region of one molecule binding to the GED domain of another DNM1L molecule. Oligomerizes in a GTP-dependent manner to form membrane-associated tubules with a spiral pattern. Interacts with GSK3B and MARCHF5. Interacts (via the GTPase and B domains) with UBE2I; the interaction promotes sumoylation of DNM1L, mainly in its B domain. Interacts with PPP3CA; the interaction dephosphorylates DNM1L and regulates its transition to mitochondria. Interacts with BCL2L1 isoform BCL-X(L) and CLTA; DNM1L and BCL2L1 isoform BCL-X(L) may form a complex in synaptic vesicles that also contains clathrin and MFF. Interacts with MFF; the interaction is inhinited by C11orf65/MFI. Interacts with FIS1. Interacts with MIEF2 and MIEF1; GTP-dependent, regulates GTP hydrolysis and DNM1L oligomerization. Interacts with PGAM5; this interaction leads to dephosphorylation at Ser-656 and activation of GTPase activity and eventually to mitochondria fragmentation. Interacts with RALBP1; during mitosis, recruits DNM1L to the mitochondrion and mediates its activation by the mitotic kinase cyclin B-CDK1. Phosphorylation/dephosphorylation events on two sites near the GED domain regulate mitochondrial fission. Phosphorylation on Ser-650 by CAMK1 and PKA inhibits the GTPase activity, leading to a defect in mitochondrial fission promoting mitochondrial elongation. Dephosphorylated on this site by PPP3CA which promotes mitochondrial fission. Phosphorylation on Ser-629 by CDK1 and PINK1 activates the GTPase activity and promotes mitochondrial fission. Phosphorylated in a circadian manner at Ser-650. Post-translationally, sumoylated on various lysine residues within the B domain, probably by MUL1. Sumoylation positively regulates mitochondrial fission. Desumoylated by SENP5 during G2/M transition of mitosis. Appears to be linked to its catalytic activity. In terms of processing, S-nitrosylation increases DNM1L dimerization, mitochondrial fission and causes neuronal damage. O-GlcNAcylation augments the level of the GTP-bound active form of DNM1L and induces translocation from the cytoplasm to mitochondria in cardiomyocytes. It also decreases phosphorylation at Ser-650. Post-translationally, ubiquitination by MARCHF5 affects mitochondrial morphology.

It localises to the cytoplasm. Its subcellular location is the cytosol. The protein localises to the golgi apparatus. The protein resides in the endomembrane system. It is found in the mitochondrion outer membrane. It localises to the peroxisome. Its subcellular location is the membrane. The protein localises to the clathrin-coated pit. The protein resides in the cytoplasmic vesicle. It is found in the secretory vesicle. It localises to the synaptic vesicle membrane. The enzyme catalyses GTP + H2O = GDP + phosphate + H(+). Its function is as follows. Functions in mitochondrial and peroxisomal division. Mediates membrane fission through oligomerization into membrane-associated tubular structures that wrap around the scission site to constrict and sever the mitochondrial membrane through a GTP hydrolysis-dependent mechanism. The specific recruitment at scission sites is mediated by membrane receptors like MFF, MIEF1 and MIEF2 for mitochondrial membranes. While the recruitment by the membrane receptors is GTP-dependent, the following hydrolysis of GTP induces the dissociation from the receptors and allows DNM1L filaments to curl into closed rings that are probably sufficient to sever a double membrane. Acts downstream of PINK1 to promote mitochondrial fission in a PRKN-dependent manner. Plays an important role in mitochondrial fission during mitosis. Through its function in mitochondrial division, ensures the survival of at least some types of postmitotic neurons, including Purkinje cells, by suppressing oxidative damage. Required for normal brain development, including that of cerebellum. Facilitates developmentally regulated apoptosis during neural tube formation. Required for a normal rate of cytochrome c release and caspase activation during apoptosis; this requirement may depend upon the cell type and the physiological apoptotic cues. Required for formation of endocytic vesicles. Proposed to regulate synaptic vesicle membrane dynamics through association with BCL2L1 isoform Bcl-X(L) which stimulates its GTPase activity in synaptic vesicles; the function may require its recruitment by MFF to clathrin-containing vesicles. Required for programmed necrosis execution. Rhythmic control of its activity following phosphorylation at Ser-650 is essential for the circadian control of mitochondrial ATP production. In Bos taurus (Bovine), this protein is Dynamin-1-like protein.